A 175-amino-acid polypeptide reads, in one-letter code: DDB1- and CUL4-associated factor 16 (175 aa).

The tract at residues Met1–Val42 is disordered. Acidic residues-rich tracts occupy residues Ser12–Asn21 and Ser29–Pro41. N6-acetyllysine is present on Lys61.

As to quaternary structure, interacts with DDB1 and CUL4A.

It is found in the nucleus. It functions in the pathway protein modification; protein ubiquitination. Functionally, functions as a substrate recognition component for CUL4-DDB1 E3 ubiquitin-protein ligase complex, which mediates ubiquitination and proteasome-dependent degradation of nuclear proteins. This Bos taurus (Bovine) protein is DDB1- and CUL4-associated factor 16 (DCAF16).